We begin with the raw amino-acid sequence, 83 residues long: Beta-toxin Ct25 (83 aa).

An N-terminal signal peptide occupies residues 1–18 (MKVLILIIASVLLIGVEC). Residues 19 to 81 (KDGYPKNSEG…VWDSATNKCG (63 aa)) form the LCN-type CS-alpha/beta domain. 4 cysteine pairs are disulfide-bonded: Cys29–Cys80, Cys33–Cys54, Cys40–Cys61, and Cys44–Cys63. Gly81 bears the Glycine amide mark.

The protein belongs to the long (4 C-C) scorpion toxin superfamily. Sodium channel inhibitor family. Beta subfamily. As to expression, expressed by the venom gland.

It is found in the secreted. In terms of biological role, beta toxins bind voltage-independently at site-4 of sodium channels (Nav) and shift the voltage of activation toward more negative potentials thereby affecting sodium channel activation and promoting spontaneous and repetitive firing. In Centruroides tecomanus (Scorpion), this protein is Beta-toxin Ct25.